The following is a 158-amino-acid chain: Protein Smg homolog (158 aa).

It belongs to the Smg family.

The polypeptide is Protein Smg homolog (Alteromonas mediterranea (strain DSM 17117 / CIP 110805 / LMG 28347 / Deep ecotype)).